A 142-amino-acid polypeptide reads, in one-letter code: Hemoglobin subunit alpha-1 (142 aa).

In terms of domain architecture, Globin spans 2-142 (VLSPADKTNV…VSTVLTSKYR (141 aa)). His-59 is a binding site for O2. His-88 contributes to the heme b binding site.

Belongs to the globin family. Heterotetramer of two alpha chains and two beta chains. In terms of tissue distribution, red blood cells.

Involved in oxygen transport from the lung to the various peripheral tissues. In terms of biological role, hemopressin acts as an antagonist peptide of the cannabinoid receptor CNR1. Hemopressin-binding efficiently blocks cannabinoid receptor CNR1 and subsequent signaling. This is Hemoglobin subunit alpha-1 (HBA1) from Hylobates lar (Lar gibbon).